The chain runs to 386 residues: Histidinol-phosphate aminotransferase (386 aa).

N6-(pyridoxal phosphate)lysine is present on K240.

This sequence belongs to the class-II pyridoxal-phosphate-dependent aminotransferase family. Histidinol-phosphate aminotransferase subfamily. As to quaternary structure, homodimer. Pyridoxal 5'-phosphate is required as a cofactor.

It carries out the reaction L-histidinol phosphate + 2-oxoglutarate = 3-(imidazol-4-yl)-2-oxopropyl phosphate + L-glutamate. Its pathway is amino-acid biosynthesis; L-histidine biosynthesis; L-histidine from 5-phospho-alpha-D-ribose 1-diphosphate: step 7/9. In Bifidobacterium longum (strain NCC 2705), this protein is Histidinol-phosphate aminotransferase.